The sequence spans 422 residues: Protein TEX1 (422 aa).

5 WD repeats span residues 61-100, 158-197, 207-246, 251-290, and 293-332; these read ITPNEILSLKFHVSGSSMAYSRMDGSLTVWFIKDASFDKS, GSKTKVNTCLYDPLGNWLLAATKSEKIYLFDVKKDHSSVC, EDNDVVYSLAWSNGGSHIFIGFKSGYLAILKAKHGILEVC, AHTGPITEIKMDPWGRNFITGSIDGNCYVWNMKSLCCELI, and DLNSAVTTLDVCHLGKILGICTEDEMVYFYDLNSGNLLHS. Residues 388 to 422 are disordered; the sequence is KRRKNNGGGNNHNKRTSKNTDRIGKDRPSRFNSKK. Positions 405 to 416 are enriched in basic and acidic residues; the sequence is KNTDRIGKDRPS.

Belongs to the THOC3 family. As to quaternary structure, component of the transcription/export (TREX) complex and the THO complex.

Its subcellular location is the nucleus. Component of the TREX complex, which operates in coupling transcription elongation to mRNA export. The protein is Protein TEX1 (TEX1) of Saccharomyces cerevisiae (strain ATCC 204508 / S288c) (Baker's yeast).